A 711-amino-acid polypeptide reads, in one-letter code: Interferon-induced GTP-binding protein Mx2 (711 aa).

Disordered regions lie at residues 1 to 26 (MPKP…HKEM) and 62 to 88 (MLTL…NLYS). Residues 66–82 (SPQQPGGKSGQQTSKGP) show a composition bias toward low complexity. The Dynamin-type G domain occupies 112–383 (DLALPTIAVI…LIGHISKSLP (272 aa)). Positions 122-129 (GDQSSGKS) are G1 motif. Residue 122–129 (GDQSSGKS) participates in GTP binding. The G2 motif stretch occupies residues 147-149 (ITR). A G3 motif region spans residues 221–224 (DLPG). GTP-binding positions include 221–225 (DLPGI) and 290–293 (TKPD). A G4 motif region spans residues 290–293 (TKPD). The segment at 322-325 (KCRG) is G5 motif. Residues 619–710 (ITEIGVHVNA…TLSKFAQSLQ (92 aa)) enclose the GED domain.

It belongs to the TRAFAC class dynamin-like GTPase superfamily. Dynamin/Fzo/YdjA family. As to expression, ubiquitous.

It localises to the cytoplasm. The protein localises to the nucleus. Its function is as follows. Interferon-induced dynamin-like GTPase with antiviral activity against influenza virus A (FLUAV). This is Interferon-induced GTP-binding protein Mx2 (MX2) from Sus scrofa (Pig).